The chain runs to 435 residues: Chaperone SurA (435 aa).

Positions 1–24 are cleaved as a signal peptide; it reads MRLRSFAFLGFMLLVAMAPSMASA. PpiC domains lie at 173–274 and 286–385; these read DTAY…KLID and VTEN…ELED.

It is found in the periplasm. It catalyses the reaction [protein]-peptidylproline (omega=180) = [protein]-peptidylproline (omega=0). Chaperone involved in the correct folding and assembly of outer membrane proteins. Recognizes specific patterns of aromatic residues and the orientation of their side chains, which are found more frequently in integral outer membrane proteins. May act in both early periplasmic and late outer membrane-associated steps of protein maturation. This is Chaperone SurA from Chromohalobacter salexigens (strain ATCC BAA-138 / DSM 3043 / CIP 106854 / NCIMB 13768 / 1H11).